A 387-amino-acid polypeptide reads, in one-letter code: O-methyltransferase fsr2 (387 aa).

Asp231 contacts S-adenosyl-L-methionine. The active-site Proton acceptor is the His280.

This sequence belongs to the class I-like SAM-binding methyltransferase superfamily. Cation-independent O-methyltransferase family. COMT subfamily.

It participates in polyketide biosynthesis. In terms of biological role, O-methyltransferase; part of the gene cluster that mediates the biosynthesis of fusarubins, highly pigmented naphthoquinones responsible for the coloration of the fruiting bodies. The non-reducing polyketide synthase FSR1 is responsible for the condensation of seven acetyl-CoA units to yield a haptaketide. After rings A and B are formed by aldol-type cyclization, the PKS-derived product is released as 6-O-demethylfusarubinaldehyde. Then, two hydroxyl groups at C-5 and C-10 are incorporated by FSR3, and simultaneously hydroxyl groups at C-6 and C-8 are methylated by FSR2. The aldehyde is, on the one hand, reduced by FSR3 to 8-O-methylfusarubin alcohol, which equilibrates mainly with 8-O-methylfusarubin and only small amounts of 8-O-methylnectriafurone. On the other hand, the aldehyde can be oxidized to form 8-O-methylfusarubinic acid, a reaction driven by FSR3 equilibrating with 8-O-methylfusarubinlactone, finally resulting in 8-O-methylanhydrofusarubinlactol after a further reduction step and loss of water. 8-O-Methylfusarubinic acid can also undergo decarboxylation, resulting in 8-O-methyl-13-hydroxynorjavanicin after another hydroxylation step at C-13. Both steps are most likely also accomplished by FSR3. No enzymatic function has been determined so far for either FSR4 and FSR5. Their deletion does not alter the product spectrum, but the possibility that they catalyze specific enzymatic steps during perithecium development cannot be ruled out. FSR4 might possess a regulatory function in the biosynthesis of fusarubins. This Gibberella fujikuroi (strain CBS 195.34 / IMI 58289 / NRRL A-6831) (Bakanae and foot rot disease fungus) protein is O-methyltransferase fsr2.